We begin with the raw amino-acid sequence, 458 residues long: Argininosuccinate lyase (458 aa).

This sequence belongs to the lyase 1 family. Argininosuccinate lyase subfamily.

The protein resides in the cytoplasm. The catalysed reaction is 2-(N(omega)-L-arginino)succinate = fumarate + L-arginine. Its pathway is amino-acid biosynthesis; L-arginine biosynthesis; L-arginine from L-ornithine and carbamoyl phosphate: step 3/3. This Salmonella typhimurium (strain LT2 / SGSC1412 / ATCC 700720) protein is Argininosuccinate lyase.